The following is a 137-amino-acid chain: Urease subunit beta (137 aa).

The disordered stretch occupies residues 118 to 137; the sequence is IIAEENKVSENANKESGYNR. Positions 126 to 137 are enriched in polar residues; sequence SENANKESGYNR.

This sequence belongs to the urease beta subunit family. As to quaternary structure, heterotrimer of UreA (gamma), UreB (beta) and UreC (alpha) subunits. Three heterotrimers associate to form the active enzyme.

The protein localises to the cytoplasm. It carries out the reaction urea + 2 H2O + H(+) = hydrogencarbonate + 2 NH4(+). The protein operates within nitrogen metabolism; urea degradation; CO(2) and NH(3) from urea (urease route): step 1/1. The sequence is that of Urease subunit beta from Staphylococcus xylosus.